Here is a 297-residue protein sequence, read N- to C-terminus: Probable endonuclease 4 (297 aa).

9 residues coordinate Zn(2+): His-69, His-110, Glu-145, Asp-179, His-182, His-214, Asp-227, His-229, and Glu-259.

The protein belongs to the AP endonuclease 2 family. The cofactor is Zn(2+).

It catalyses the reaction Endonucleolytic cleavage to 5'-phosphooligonucleotide end-products.. Its function is as follows. Endonuclease IV plays a role in DNA repair. It cleaves phosphodiester bonds at apurinic or apyrimidinic (AP) sites, generating a 3'-hydroxyl group and a 5'-terminal sugar phosphate. In Listeria welshimeri serovar 6b (strain ATCC 35897 / DSM 20650 / CCUG 15529 / CIP 8149 / NCTC 11857 / SLCC 5334 / V8), this protein is Probable endonuclease 4.